The chain runs to 388 residues: Pepsin F (388 aa).

The first 15 residues, 1 to 15 (MKWLGLLGLVALSEC), serve as a signal peptide directing secretion. A propeptide spans 16 to 58 (LVTIPLMKVKSMRENLRENDILLDYLEKHPYRPTYKLLSGQQD) (activation peptide). The 312-residue stretch at 74–385 (YIGIISIGTP…DRANNRIGLA (312 aa)) folds into the Peptidase A1 domain. D92 is a catalytic residue. 2 disulfides stabilise this stretch: C105–C110 and C266–C270. D275 is a catalytic residue. C309 and C343 are joined by a disulfide.

Belongs to the peptidase A1 family.

Its subcellular location is the secreted. The catalysed reaction is Preferential cleavage: hydrophobic, preferably aromatic, residues in P1 and P1' positions. Cleaves 1-Phe-|-Val-2, 4-Gln-|-His-5, 13-Glu-|-Ala-14, 14-Ala-|-Leu-15, 15-Leu-|-Tyr-16, 16-Tyr-|-Leu-17, 23-Gly-|-Phe-24, 24-Phe-|-Phe-25 and 25-Phe-|-Tyr-26 bonds in the B chain of insulin.. Shows particularly broad specificity; although bonds involving phenylalanine and leucine are preferred, many others are also cleaved to some extent. The chain is Pepsin F from Oryctolagus cuniculus (Rabbit).